The following is a 191-amino-acid chain: UPF0302 protein USA300HOU_1400 (191 aa).

This sequence belongs to the UPF0302 family.

The protein is UPF0302 protein USA300HOU_1400 of Staphylococcus aureus (strain USA300 / TCH1516).